We begin with the raw amino-acid sequence, 47 residues long: Photosystem II reaction center protein K (47 aa).

Residues M1–A10 constitute a propeptide that is removed on maturation. A helical transmembrane segment spans residues A20–W40.

It belongs to the PsbK family. PSII is composed of 1 copy each of membrane proteins PsbA, PsbB, PsbC, PsbD, PsbE, PsbF, PsbH, PsbI, PsbJ, PsbK, PsbL, PsbM, PsbT, PsbX, PsbY, Psb30/Ycf12, peripheral proteins PsbO, CyanoQ (PsbQ), PsbU, PsbV and a large number of cofactors. It forms dimeric complexes.

The protein resides in the cellular thylakoid membrane. One of the components of the core complex of photosystem II (PSII). PSII is a light-driven water:plastoquinone oxidoreductase that uses light energy to abstract electrons from H(2)O, generating O(2) and a proton gradient subsequently used for ATP formation. It consists of a core antenna complex that captures photons, and an electron transfer chain that converts photonic excitation into a charge separation. This is Photosystem II reaction center protein K from Prochlorococcus marinus (strain MIT 9303).